The sequence spans 189 residues: Glycerol-3-phosphate acyltransferase (189 aa).

The next 5 membrane-spanning stretches (helical) occupy residues Met1–Leu21, Lys50–Ala70, Ala81–Gly101, Met111–Phe131, and Leu151–Val171.

The protein belongs to the PlsY family. Probably interacts with PlsX.

The protein localises to the cell inner membrane. It catalyses the reaction an acyl phosphate + sn-glycerol 3-phosphate = a 1-acyl-sn-glycero-3-phosphate + phosphate. Its pathway is lipid metabolism; phospholipid metabolism. Catalyzes the transfer of an acyl group from acyl-phosphate (acyl-PO(4)) to glycerol-3-phosphate (G3P) to form lysophosphatidic acid (LPA). This enzyme utilizes acyl-phosphate as fatty acyl donor, but not acyl-CoA or acyl-ACP. The protein is Glycerol-3-phosphate acyltransferase of Pseudomonas entomophila (strain L48).